The following is a 305-amino-acid chain: Ornithine carbamoyltransferase (305 aa).

Carbamoyl phosphate is bound by residues 50 to 53 (STRT), Q77, R101, and 128 to 131 (HPCQ). L-ornithine is bound by residues N159, D222, and 226-227 (SM). Carbamoyl phosphate-binding positions include 262 to 263 (CL) and R290.

This sequence belongs to the aspartate/ornithine carbamoyltransferase superfamily. OTCase family.

The protein resides in the cytoplasm. The catalysed reaction is carbamoyl phosphate + L-ornithine = L-citrulline + phosphate + H(+). It participates in amino-acid biosynthesis; L-arginine biosynthesis; L-arginine from L-ornithine and carbamoyl phosphate: step 1/3. In terms of biological role, reversibly catalyzes the transfer of the carbamoyl group from carbamoyl phosphate (CP) to the N(epsilon) atom of ornithine (ORN) to produce L-citrulline. The chain is Ornithine carbamoyltransferase from Synechococcus elongatus (strain ATCC 33912 / PCC 7942 / FACHB-805) (Anacystis nidulans R2).